A 248-amino-acid chain; its full sequence is Thioesterase FSL2 (248 aa).

Residues serine 125, aspartate 195, and histidine 223 each act as charge relay system in the active site.

The protein belongs to the LovG family.

The protein operates within secondary metabolite biosynthesis. Functionally, thioesterase; part of the gene cluster that mediates the biosynthesis of fusarielins F, G and H, decaketide compounds with 5 methylations and a decaline core that act as mycoestrogens as they stimulate growth of MCF-7 breast cancer cells. The initial compound in the pathway is produced by the reducing polyketide synthase FSL1. FSL1 lacks an active enoyl reductase (ER) domain and biosynthesis of fusarielins relies on the trans-acting enoyl reductase FSL5, before it is released through hydrolysis catalyzed by the thioesterase FSL2. Fusarielins F, G, and H have a C11=C12 cis double bond and is fully reduced between C10 and C11 and between C12 and C13. FSL3 can be involved in the formation of the C11=C12 cis double bond by moving a hypothetical C10=C11 or C12=C13 trans double bond to form prefusarielin. Prefusarielin is oxygenated at C15 and C16 by the cytochrome P450 monooxygenase FSL4, resulting in fusarielin F, which subsequently is epoxidized into fusarielin G by the same enzyme. The final step in the pathway is a reduction of the carboxylic acid moiety to yield fusarielin H via a still undetermined mechanism. This is Thioesterase FSL2 from Gibberella zeae (strain ATCC MYA-4620 / CBS 123657 / FGSC 9075 / NRRL 31084 / PH-1) (Wheat head blight fungus).